Reading from the N-terminus, the 139-residue chain is Coat protein TP2 (139 aa).

Its subcellular location is the virion. The chain is Coat protein TP2 from Thermoproteus tenax virus 1 (strain KRA1) (TTV1).